A 436-amino-acid chain; its full sequence is UPF0597 protein YhaM (436 aa).

It belongs to the UPF0597 family.

This chain is UPF0597 protein YhaM, found in Salmonella choleraesuis (strain SC-B67).